The following is a 485-amino-acid chain: Threonine synthase-like 2 (485 aa).

Position 113 is an N6-(pyridoxal phosphate)lysine (Lys-113).

Belongs to the threonine synthase family. Requires pyridoxal 5'-phosphate as cofactor.

Functionally, acts as a catabolic phospho-lyase on both gamma- and beta-phosphorylated substrates. Degrades O-phospho-threonine (PThr) to alpha-ketobutyrate, ammonia and phosphate. This chain is Threonine synthase-like 2 (Thnsl2), found in Rattus norvegicus (Rat).